The sequence spans 366 residues: 3-dehydroquinate synthase (366 aa).

NAD(+)-binding positions include 107–111 (GVIGD), 131–132 (TT), Lys-144, and Lys-153. Residues Glu-186, His-251, and His-268 each coordinate Zn(2+).

Belongs to the sugar phosphate cyclases superfamily. Dehydroquinate synthase family. Co(2+) is required as a cofactor. The cofactor is Zn(2+). NAD(+) serves as cofactor.

It is found in the cytoplasm. The enzyme catalyses 7-phospho-2-dehydro-3-deoxy-D-arabino-heptonate = 3-dehydroquinate + phosphate. It functions in the pathway metabolic intermediate biosynthesis; chorismate biosynthesis; chorismate from D-erythrose 4-phosphate and phosphoenolpyruvate: step 2/7. In terms of biological role, catalyzes the conversion of 3-deoxy-D-arabino-heptulosonate 7-phosphate (DAHP) to dehydroquinate (DHQ). The protein is 3-dehydroquinate synthase of Microcystis aeruginosa (strain NIES-843 / IAM M-2473).